A 256-amino-acid polypeptide reads, in one-letter code: Diacetyl reductase [(S)-acetoin forming] (256 aa).

NAD(+) contacts are provided by residues 6–33 (LVTG…AIAD) and aspartate 59. Serine 139 lines the substrate pocket. Catalysis depends on tyrosine 152, which acts as the Proton acceptor. An NAD(+)-binding site is contributed by lysine 156.

The protein belongs to the short-chain dehydrogenases/reductases (SDR) family. In terms of assembly, homotetramer.

It carries out the reaction (S)-acetoin + NAD(+) = diacetyl + NADH + H(+). Its function is as follows. Catalyzes the reversible reduction of (S)-acetoin to 2,3-butanediol in the presence of NADH. In Klebsiella pneumoniae, this protein is Diacetyl reductase [(S)-acetoin forming] (budC).